The sequence spans 327 residues: DNA repair and recombination protein RadA (327 aa).

Position 113–120 (Gly113–Ser120) interacts with ATP.

The protein belongs to the eukaryotic RecA-like protein family.

Its function is as follows. Involved in DNA repair and in homologous recombination. Binds and assemble on single-stranded DNA to form a nucleoprotein filament. Hydrolyzes ATP in a ssDNA-dependent manner and promotes DNA strand exchange between homologous DNA molecules. The sequence is that of DNA repair and recombination protein RadA from Ignicoccus hospitalis (strain KIN4/I / DSM 18386 / JCM 14125).